A 279-amino-acid polypeptide reads, in one-letter code: Oxygen-dependent coproporphyrinogen-III oxidase (279 aa).

Position 102 (S102) interacts with substrate. Residues H106 and H116 each contribute to the a divalent metal cation site. Residue H116 is the Proton donor of the active site. Residue 118 to 120 (NTR) participates in substrate binding. H149 and H179 together coordinate a divalent metal cation. The important for dimerization stretch occupies residues 244 to 279 (YVEFNLLYDRGTKFGLMTDGNVEAILMSLPPEVKFN).

Belongs to the aerobic coproporphyrinogen-III oxidase family. In terms of assembly, homodimer. A divalent metal cation is required as a cofactor.

It is found in the cytoplasm. The catalysed reaction is coproporphyrinogen III + O2 + 2 H(+) = protoporphyrinogen IX + 2 CO2 + 2 H2O. It participates in porphyrin-containing compound metabolism; protoporphyrin-IX biosynthesis; protoporphyrinogen-IX from coproporphyrinogen-III (O2 route): step 1/1. Involved in the heme biosynthesis. Catalyzes the aerobic oxidative decarboxylation of propionate groups of rings A and B of coproporphyrinogen-III to yield the vinyl groups in protoporphyrinogen-IX. This Rickettsia peacockii (strain Rustic) protein is Oxygen-dependent coproporphyrinogen-III oxidase.